A 175-amino-acid chain; its full sequence is MAELHIIGQIIGATGFPQNSLFCKWGVHTGGAWRLLSGLREGQTQVDMPQTGDMAYWSHPIDLHYTTKGLQGWPKLHLQVWHQDSFGRCQLYGYGYIHVPSSPGQHRLQCVTWRPLGSWQDQLSEMFVGGGPQLRSPDLIYSGADRYRLHTVGMGTVELELCIILRHFDRYGVES.

Residues 2–118 (AELHIIGQII…QCVTWRPLGS (117 aa)) enclose the C2 B9-type domain.

It belongs to the B9D family. As to quaternary structure, part of the tectonic-like complex (also named B9 complex).

The protein resides in the cytoplasm. The protein localises to the cytoskeleton. It is found in the cilium basal body. It localises to the cilium axoneme. Functionally, component of the tectonic-like complex, a complex localized at the transition zone of primary cilia and acting as a barrier that prevents diffusion of transmembrane proteins between the cilia and plasma membranes. In Danio rerio (Zebrafish), this protein is B9 domain-containing protein 2 (b9d2).